We begin with the raw amino-acid sequence, 451 residues long: Signal recognition particle 54 kDa protein (451 aa).

Residues 105–112, 187–191, and 247–250 each bind GTP; these read GVQGTGKT, DTAGR, and TKMD.

The protein belongs to the GTP-binding SRP family. SRP54 subfamily. As to quaternary structure, part of the signal recognition particle protein translocation system, which is composed of SRP and FtsY. Archaeal SRP consists of a 7S RNA molecule of 300 nucleotides and two protein subunits: SRP54 and SRP19.

It is found in the cytoplasm. The catalysed reaction is GTP + H2O = GDP + phosphate + H(+). In terms of biological role, involved in targeting and insertion of nascent membrane proteins into the cytoplasmic membrane. Binds to the hydrophobic signal sequence of the ribosome-nascent chain (RNC) as it emerges from the ribosomes. The SRP-RNC complex is then targeted to the cytoplasmic membrane where it interacts with the SRP receptor FtsY. The protein is Signal recognition particle 54 kDa protein of Acidianus ambivalens (Desulfurolobus ambivalens).